The following is a 240-amino-acid chain: 1-(5-phosphoribosyl)-5-[(5-phosphoribosylamino)methylideneamino] imidazole-4-carboxamide isomerase (240 aa).

The active-site Proton acceptor is the Asp9. Asp131 functions as the Proton donor in the catalytic mechanism.

This sequence belongs to the HisA/HisF family.

It localises to the cytoplasm. The enzyme catalyses 1-(5-phospho-beta-D-ribosyl)-5-[(5-phospho-beta-D-ribosylamino)methylideneamino]imidazole-4-carboxamide = 5-[(5-phospho-1-deoxy-D-ribulos-1-ylimino)methylamino]-1-(5-phospho-beta-D-ribosyl)imidazole-4-carboxamide. Its pathway is amino-acid biosynthesis; L-histidine biosynthesis; L-histidine from 5-phospho-alpha-D-ribose 1-diphosphate: step 4/9. The chain is 1-(5-phosphoribosyl)-5-[(5-phosphoribosylamino)methylideneamino] imidazole-4-carboxamide isomerase from Azobacteroides pseudotrichonymphae genomovar. CFP2.